The following is a 92-amino-acid chain: DNA-directed RNA polymerase subunit Rpo11 (92 aa).

The protein belongs to the archaeal Rpo11/eukaryotic RPB11/RPC19 RNA polymerase subunit family. As to quaternary structure, part of the RNA polymerase complex.

It localises to the cytoplasm. The catalysed reaction is RNA(n) + a ribonucleoside 5'-triphosphate = RNA(n+1) + diphosphate. In terms of biological role, DNA-dependent RNA polymerase (RNAP) catalyzes the transcription of DNA into RNA using the four ribonucleoside triphosphates as substrates. In Halorubrum lacusprofundi (strain ATCC 49239 / DSM 5036 / JCM 8891 / ACAM 34), this protein is DNA-directed RNA polymerase subunit Rpo11.